A 112-amino-acid chain; its full sequence is MSAQSAVGSIETIGFPGILAAADAMVKAGRITIVGYIRAGSARFTLNIRGDVQEVKTAMAAGIDAINRTEGADVKTWVIIPRPHENVVAVLPIDFSPEVEPFREAAEGLNRR.

Residues 6–92 (AVGSIETIGF…PHENVVAVLP (87 aa)) form the BMC domain.

The protein belongs to the bacterial microcompartments protein family. CcmK subfamily. In terms of assembly, homohexamer. Interacts with full-length CcmM. Forms mixed heterohexamers with CcmK3, probably with 1:5 CcmK3:CcmK4 stoichiometry. Only very weak interactions with CcmK1 and CcmK2 were seen.

It is found in the carboxysome. In terms of biological role, a probably minor shell protein component of the carboxysome, a polyhedral inclusion where RuBisCO (ribulose bisphosphate carboxylase, rbcL-rbcS) is sequestered. The central pore probably regulates metabolite flux, as might the gaps between assembled homohexamers. Homohexamers make sheets that probably form the facets of the polyhedral carboxysome. This subunit probably makes both homohexamers and heterohexamers with CcmK3. The chain is Carboxysome shell protein CcmK4 from Synechocystis sp. (strain ATCC 27184 / PCC 6803 / Kazusa).